The chain runs to 456 residues: Probable hexose phosphate transport protein (456 aa).

Transmembrane regions (helical) follow at residues 34 to 54 (IFYS…SFTF), 70 to 90 (LGII…VSGV), 113 to 133 (IFFG…INGW), 161 to 181 (VWST…GIAI), 185 to 205 (GWRG…FILI), 257 to 277 (YVLS…IYVV), 302 to 322 (LCVS…GWLS), 331 to 351 (GPMN…LWGT), 362 to 382 (AFLF…GLAA), 394 to 414 (ASGF…YPLG), and 421 to 441 (GWHG…LFFL).

It belongs to the major facilitator superfamily. Organophosphate:Pi antiporter (OPA) (TC 2.A.1.4) family.

It localises to the cell membrane. Transport protein for sugar phosphate uptake. The sequence is that of Probable hexose phosphate transport protein from Chlamydia muridarum (strain MoPn / Nigg).